Here is a 232-residue protein sequence, read N- to C-terminus: uncharacterized protein (232 aa).

The next 7 helical transmembrane spans lie at 17 to 37 (FLAK…VFAY), 54 to 74 (MSFM…SGAL), 84 to 104 (ALFL…FMIY), 107 to 127 (GSIV…SVYG), 138 to 158 (GSYL…NMFF), 161 to 181 (SGLN…LTAY), and 203 to 223 (MAVV…LYLL).

The protein belongs to the BI1 family.

It localises to the cell membrane. This is an uncharacterized protein from Borreliella burgdorferi (strain ATCC 35210 / DSM 4680 / CIP 102532 / B31) (Borrelia burgdorferi).